Here is a 276-residue protein sequence, read N- to C-terminus: Nickel import system permease protein NikC (276 aa).

The next 5 helical transmembrane spans lie at 10–30 (LIFF…FFVS), 73–93 (LFVT…LGLF), 108–128 (FIDV…ASFF), 186–206 (IIPA…LYIS), and 238–258 (IMLI…NLTG). The ABC transmembrane type-1 domain maps to 69–258 (ARSTLFVTVL…ITILIFNLTG (190 aa)).

The protein belongs to the binding-protein-dependent transport system permease family. OppBC subfamily. The complex is composed of two ATP-binding proteins (NikD and NikE), two transmembrane proteins (NikB and NikC) and a solute-binding protein (NikA).

It localises to the cell membrane. Its function is as follows. Part of the ABC transporter complex NikABCDE (Opp2) involved in nickel import. Probably responsible for the translocation of the substrate across the membrane. The polypeptide is Nickel import system permease protein NikC (Staphylococcus aureus (strain Mu50 / ATCC 700699)).